We begin with the raw amino-acid sequence, 22 residues long: Cysteine proteinase (22 aa).

Positions glycine 1–glutamine 22 are disordered.

This sequence belongs to the peptidase C1 family.

This Trichomonas vaginalis protein is Cysteine proteinase.